We begin with the raw amino-acid sequence, 514 residues long: MEDLIVAIVVGAFSSAISIFVVRKLDRAKFEVFIEQAKAKAKVIEHEAEMALKDAQLKAKIECDREFKSAKREYEAMLLKIERKERELNEHLESELKAIKLEKEQIVEKNRKITTLKDGLEEQKKTYEEKTLEAIKILENACGLTQSEAKELMLKKVKEDSRAEISSIFRKRYKIAEQNTKNEINNMLSQAVTRYAGEFAAERLINNIPLNDEETKGKIIGKEGRNIKALEMLLGVDIIIDDTPNTITVSSFNLYRRAVATKTIRELLEDGRIQPARIEEIYKKVKSEFDKNIQKEGEDVVMELGIKTMHPELIKLVGRLRYRASYGQNALAHTLEVAHLSGLLASQMGGDAILARRAGLLHDIGKALTHEAPGSHVDLGAEICKRYDECDTVINAIYAHHGHEEPINVESAAVCAADALSAARPGARREVLESFLKRVEEVENISTSKLGVLNAYAINAGREVRVIVKAELVNDDEAVLLATEIAKEIEEKVQYPGEIKVNVIRETRAESYAR.

The chain crosses the membrane as a helical span at residues 2 to 22 (EDLIVAIVVGAFSSAISIFVV). One can recognise a KH domain in the interval 204 to 268 (LINNIPLNDE…VATKTIRELL (65 aa)). An HD domain is found at 330–423 (ALAHTLEVAH…VCAADALSAA (94 aa)).

The protein belongs to the RNase Y family.

It localises to the cell membrane. Endoribonuclease that initiates mRNA decay. This is Ribonuclease Y from Aliarcobacter butzleri (strain RM4018) (Arcobacter butzleri).